The chain runs to 202 residues: Helix-loop-helix protein 10 (202 aa).

Disordered regions lie at residues 1 to 26 (MESS…NSEL) and 83 to 112 (QNKS…GKID). Residues 17-26 (STGNHGNSEL) show a composition bias toward polar residues. The segment at 121–134 (TRRYEANARERNRV) is basic motif. One can recognise a bHLH domain in the interval 121 to 172 (TRRYEANARERNRVQQLSKMFDQLRVCLPIEDDAKISKLATLKVASSYIGYL). Positions 135–172 (QQLSKMFDQLRVCLPIEDDAKISKLATLKVASSYIGYL) are helix-loop-helix motif.

Heterodimer with hlh-2. In terms of tissue distribution, expressed in intestine, neurons in head, body and tail, and in body hypodermis, and vulva. Expressed in neurons in the male-specific genital sensilla (simple sense organs) known as rays.

The protein localises to the nucleus. It is found in the cytoplasm. In terms of biological role, probable transcription factor which binds the E box motif 5'-CA[TC][AG]TG-3'. The sequence is that of Helix-loop-helix protein 10 from Caenorhabditis elegans.